The sequence spans 226 residues: MPRVMWKNFHLCFPSNLTKPSSSPSGATSDDPNRPSILLINNFNLLYDDSSAAHRRLSKPLIHDVEPSSTFTASTSTAANSSSSSASYDDSDNYGFAPDDDSPPPDLTAVLASRRFFFSSPGCSNSITDSPDLRCRDNYDTATRLLTGGTAVKHYVQSPDPYNDFRRSMQEMIDAVTNAGDLRRYEFLHELLLSYLSLNAADTHKFIIRAFADILVSLLSDGHRIS.

A compositionally biased stretch (low complexity) spans 68–87 (SSTFTASTSTAANSSSSSAS). The segment at 68 to 104 (SSTFTASTSTAANSSSSSASYDDSDNYGFAPDDDSPP) is disordered. The region spanning 152 to 217 (VKHYVQSPDP…IRAFADILVS (66 aa)) is the OVATE domain.

Interacts with KNAT1, KNAT2, KNAT3 and KNAT4. As to expression, expressed in roots, shoots, stems, flower buds and siliques.

The protein localises to the nucleus. Functionally, transcriptional repressor that regulates multiple aspects of plant growth and development through the regulation of BEL1-LIKE (BLH) and KNOX TALE (KNAT) homeodomain transcription factors. In Arabidopsis thaliana (Mouse-ear cress), this protein is Transcription repressor OFP12 (OFP12).